Reading from the N-terminus, the 122-residue chain is Small ribosomal subunit protein uS13 (122 aa).

A disordered region spans residues 92 to 122 (HRRGLPVRGQRTHTNARTRKGPAKPIAGKKK).

This sequence belongs to the universal ribosomal protein uS13 family. Part of the 30S ribosomal subunit. Forms a loose heterodimer with protein S19. Forms two bridges to the 50S subunit in the 70S ribosome.

Its function is as follows. Located at the top of the head of the 30S subunit, it contacts several helices of the 16S rRNA. In the 70S ribosome it contacts the 23S rRNA (bridge B1a) and protein L5 of the 50S subunit (bridge B1b), connecting the 2 subunits; these bridges are implicated in subunit movement. Contacts the tRNAs in the A and P-sites. This is Small ribosomal subunit protein uS13 from Paracoccus denitrificans (strain Pd 1222).